Consider the following 168-residue polypeptide: tRNA-splicing endonuclease (168 aa).

Active-site residues include Tyr-107, His-114, and Lys-145.

It belongs to the tRNA-intron endonuclease family. Archaeal short subfamily. As to quaternary structure, homotetramer; although the tetramer contains four active sites, only two participate in the cleavage. Therefore, it should be considered as a dimer of dimers.

It carries out the reaction pretRNA = a 3'-half-tRNA molecule with a 5'-OH end + a 5'-half-tRNA molecule with a 2',3'-cyclic phosphate end + an intron with a 2',3'-cyclic phosphate and a 5'-hydroxyl terminus.. Endonuclease that removes tRNA introns. Cleaves pre-tRNA at the 5'- and 3'-splice sites to release the intron. The products are an intron and two tRNA half-molecules bearing 2',3' cyclic phosphate and 5'-OH termini. Recognizes a pseudosymmetric substrate in which 2 bulged loops of 3 bases are separated by a stem of 4 bp. This chain is tRNA-splicing endonuclease, found in Thermococcus kodakarensis (strain ATCC BAA-918 / JCM 12380 / KOD1) (Pyrococcus kodakaraensis (strain KOD1)).